We begin with the raw amino-acid sequence, 468 residues long: ATP synthase subunit beta (468 aa).

155–162 contacts ATP; the sequence is GGAGVGKT.

This sequence belongs to the ATPase alpha/beta chains family. In terms of assembly, F-type ATPases have 2 components, CF(1) - the catalytic core - and CF(0) - the membrane proton channel. CF(1) has five subunits: alpha(3), beta(3), gamma(1), delta(1), epsilon(1). CF(0) has three main subunits: a(1), b(2) and c(9-12). The alpha and beta chains form an alternating ring which encloses part of the gamma chain. CF(1) is attached to CF(0) by a central stalk formed by the gamma and epsilon chains, while a peripheral stalk is formed by the delta and b chains.

It localises to the cell membrane. The catalysed reaction is ATP + H2O + 4 H(+)(in) = ADP + phosphate + 5 H(+)(out). Its function is as follows. Produces ATP from ADP in the presence of a proton gradient across the membrane. The catalytic sites are hosted primarily by the beta subunits. The chain is ATP synthase subunit beta from Streptococcus pyogenes serotype M1.